The chain runs to 948 residues: P cell-type agglutination protein map4 (948 aa).

Positions 1-23 (MNSYAILLSLFFSFERLLTLANA) are cleaved as a signal peptide. N-linked (GlcNAc...) asparagine glycosylation is found at Asn-31, Asn-32, and Asn-57. 2 disordered regions span residues 136–174 (IPRGDSATSTSIAPTYSASDSSATTITSSSPSTSIIGTG) and 253–333 (FYET…PTTY). Residues 149–174 (PTYSASDSSATTITSSSPSTSIIGTG) show a composition bias toward low complexity. Polar residues predominate over residues 253–264 (FYETKSSTSSVP). A compositionally biased stretch (low complexity) spans 265–332 (TQTIDSSSFT…PSLSSALPTT (68 aa)). Residue Asn-383 is glycosylated (N-linked (GlcNAc...) asparagine). The tract at residues 408–432 (LTSSTKKIPSTTLPTSSKMITTTTP) is disordered. N-linked (GlcNAc...) asparagine glycosylation is found at Asn-436, Asn-469, Asn-491, Asn-522, Asn-553, Asn-568, and Asn-598. 5 repeat units span residues 617–652 (SYVTETTTSGSVGFTTTIATPVGSTAGTVVVDIPTP), 653–688 (SWVTETVTSGSVGFTTTIATPVGSTAGTVLVDIPTP), 689–724 (SWVTETVTSGSVEFTTTIATPVGTTAGTVVVDIPTP), 725–760 (SWVTETVTSGSVGFTTTIATPIGTTAGTVLVDIPTP), and 761–796 (SWVTETVTSGSVGFTTTIATPVGTTAGTVLIDVPTP). Positions 617–796 (SYVTETTTSG…GTVLIDVPTP (180 aa)) are 5 X 36 AA approximate tandem repeats. In terms of domain architecture, DIPSY spans 796-948 (PTASSSPFPS…ANVVLRALEY (153 aa)). Residue Asn-921 is glycosylated (N-linked (GlcNAc...) asparagine).

This sequence belongs to the mam3/map4 family.

Its subcellular location is the cell surface. Its function is as follows. P cell-type specific protein which involved in agglutination during conjugation. The sequence is that of P cell-type agglutination protein map4 from Schizosaccharomyces pombe (strain 972 / ATCC 24843) (Fission yeast).